A 598-amino-acid polypeptide reads, in one-letter code: Elongation factor 4 (598 aa).

A tr-type G domain is found at 2–184 (NNIRNFAIIA…AIVTKLPAPQ (183 aa)). GTP is bound by residues 14-19 (DHGKST) and 131-134 (NKVD).

It belongs to the TRAFAC class translation factor GTPase superfamily. Classic translation factor GTPase family. LepA subfamily.

Its subcellular location is the cell membrane. It catalyses the reaction GTP + H2O = GDP + phosphate + H(+). Functionally, required for accurate and efficient protein synthesis under certain stress conditions. May act as a fidelity factor of the translation reaction, by catalyzing a one-codon backward translocation of tRNAs on improperly translocated ribosomes. Back-translocation proceeds from a post-translocation (POST) complex to a pre-translocation (PRE) complex, thus giving elongation factor G a second chance to translocate the tRNAs correctly. Binds to ribosomes in a GTP-dependent manner. The polypeptide is Elongation factor 4 (Wolbachia pipientis subsp. Culex pipiens (strain wPip)).